We begin with the raw amino-acid sequence, 83 residues long: Putative cytochrome b5 B11H24.095 (83 aa).

Residues 2–78 enclose the Cytochrome b5 heme-binding domain; that stretch reads SQTFTKSQVA…GTKLKVGTLA (77 aa). Residues H37 and H60 each contribute to the heme site.

It belongs to the cytochrome b5 family.

The chain is Putative cytochrome b5 B11H24.095 from Neurospora crassa (strain ATCC 24698 / 74-OR23-1A / CBS 708.71 / DSM 1257 / FGSC 987).